The chain runs to 341 residues: Glycerol-3-phosphate dehydrogenase [NAD(P)+] (341 aa).

NADPH-binding residues include Ser15, Trp16, Arg36, and Lys110. 3 residues coordinate sn-glycerol 3-phosphate: Lys110, Gly139, and Ser141. Ala143 contacts NADPH. Sn-glycerol 3-phosphate-binding residues include Lys194, Asp247, Ser257, Arg258, and Asn259. Catalysis depends on Lys194, which acts as the Proton acceptor. NADPH is bound at residue Arg258. Val282 and Glu284 together coordinate NADPH.

Belongs to the NAD-dependent glycerol-3-phosphate dehydrogenase family.

It is found in the cytoplasm. It catalyses the reaction sn-glycerol 3-phosphate + NAD(+) = dihydroxyacetone phosphate + NADH + H(+). The catalysed reaction is sn-glycerol 3-phosphate + NADP(+) = dihydroxyacetone phosphate + NADPH + H(+). It participates in membrane lipid metabolism; glycerophospholipid metabolism. Catalyzes the reduction of the glycolytic intermediate dihydroxyacetone phosphate (DHAP) to sn-glycerol 3-phosphate (G3P), the key precursor for phospholipid synthesis. The protein is Glycerol-3-phosphate dehydrogenase [NAD(P)+] of Xanthomonas euvesicatoria pv. vesicatoria (strain 85-10) (Xanthomonas campestris pv. vesicatoria).